The following is a 164-amino-acid chain: HTH-type transcriptional regulator IscR (164 aa).

The 130-residue stretch at 2-131 (RLTSKGRYAV…NNITLDELVN (130 aa)) folds into the HTH rrf2-type domain. A DNA-binding region (H-T-H motif) is located at residues 28–51 (LADISERQGISLSYLEQLFSRLRK). [2Fe-2S] cluster-binding residues include Cys-92, Cys-98, and Cys-104.

[2Fe-2S] cluster is required as a cofactor.

In terms of biological role, regulates the transcription of several operons and genes involved in the biogenesis of Fe-S clusters and Fe-S-containing proteins. In Pectobacterium carotovorum subsp. carotovorum (strain PC1), this protein is HTH-type transcriptional regulator IscR.